A 299-amino-acid chain; its full sequence is Probable lipid kinase YegS-like (299 aa).

Positions 2–133 constitute a DAGKc domain; it reads SRSAGSFLIL…IDIAHVNDKT (132 aa). ATP is bound by residues Thr-40, 66 to 72, and Thr-95; that span reads GDGTINE. Residues Leu-215, Asp-218, and Leu-220 each coordinate Mg(2+). Glu-271 acts as the Proton acceptor in catalysis.

The protein belongs to the diacylglycerol/lipid kinase family. YegS lipid kinase subfamily. It depends on Mg(2+) as a cofactor. Ca(2+) serves as cofactor.

The protein resides in the cytoplasm. Its function is as follows. Probably phosphorylates lipids; the in vivo substrate is unknown. The sequence is that of Probable lipid kinase YegS-like from Cronobacter sakazakii (strain ATCC BAA-894) (Enterobacter sakazakii).